Reading from the N-terminus, the 151-residue chain is Small ribosomal subunit protein uS11 (151 aa).

Ser16 carries the post-translational modification Phosphoserine. Glycyl lysine isopeptide (Lys-Gly) (interchain with G-Cter in SUMO2) cross-links involve residues Lys61, Lys63, and Lys106. A disordered region spans residues 131 to 151; the sequence is DVTPIPSDSTRRKGGRRGRRL. Thr133 carries the phosphothreonine modification. At Ser139 the chain carries Phosphoserine. Positions 142 to 151 are enriched in basic residues; it reads RKGGRRGRRL.

It belongs to the universal ribosomal protein uS11 family. As to quaternary structure, component of the small ribosomal subunit. Part of the small subunit (SSU) processome, composed of more than 70 proteins and the RNA chaperone small nucleolar RNA (snoRNA) U3.

It is found in the cytoplasm. The protein localises to the nucleus. The protein resides in the nucleolus. Component of the small ribosomal subunit. The ribosome is a large ribonucleoprotein complex responsible for the synthesis of proteins in the cell. Part of the small subunit (SSU) processome, first precursor of the small eukaryotic ribosomal subunit. During the assembly of the SSU processome in the nucleolus, many ribosome biogenesis factors, an RNA chaperone and ribosomal proteins associate with the nascent pre-rRNA and work in concert to generate RNA folding, modifications, rearrangements and cleavage as well as targeted degradation of pre-ribosomal RNA by the RNA exosome. The protein is Small ribosomal subunit protein uS11 (Rps14) of Mus musculus (Mouse).